A 244-amino-acid chain; its full sequence is Chalcone--flavanone isomerase (244 aa).

The substrate site is built by Thr45, Asn110, and Ser187.

The protein belongs to the chalcone isomerase family.

The catalysed reaction is a chalcone = a flavanone.. Its pathway is secondary metabolite biosynthesis; flavonoid biosynthesis. Catalyzes the intramolecular cyclization of bicyclic chalcones into tricyclic (S)-flavanones. Responsible for the isomerization of 4,2',4',6'-tetrahydroxychalcone (also termed chalcone) into naringenin. The polypeptide is Chalcone--flavanone isomerase (CHI) (Nicotiana tabacum (Common tobacco)).